An 841-amino-acid polypeptide reads, in one-letter code: Protein translocase subunit SecA (841 aa).

ATP is bound by residues glutamine 85, 103–107 (GEGKT), and aspartate 492. The disordered stretch occupies residues 790 to 814 (IQGQTTAHQPKEGDEEKQAKKKPVR). Positions 798-807 (QPKEGDEEKQ) are enriched in basic and acidic residues. Positions 825, 827, 836, and 837 each coordinate Zn(2+).

The protein belongs to the SecA family. Monomer and homodimer. Part of the essential Sec protein translocation apparatus which comprises SecA, SecYEG and auxiliary proteins SecDF. Other proteins may also be involved. Zn(2+) is required as a cofactor.

It is found in the cell membrane. It localises to the cytoplasm. It catalyses the reaction ATP + H2O + cellular proteinSide 1 = ADP + phosphate + cellular proteinSide 2.. Functionally, part of the Sec protein translocase complex. Interacts with the SecYEG preprotein conducting channel. Has a central role in coupling the hydrolysis of ATP to the transfer of proteins into and across the cell membrane, serving as an ATP-driven molecular motor driving the stepwise translocation of polypeptide chains across the membrane. The chain is Protein translocase subunit SecA from Bacillus licheniformis (strain ATCC 14580 / DSM 13 / JCM 2505 / CCUG 7422 / NBRC 12200 / NCIMB 9375 / NCTC 10341 / NRRL NRS-1264 / Gibson 46).